A 52-amino-acid chain; its full sequence is UPF0181 protein VPA0916 (52 aa).

The protein belongs to the UPF0181 family.

The sequence is that of UPF0181 protein VPA0916 from Vibrio parahaemolyticus serotype O3:K6 (strain RIMD 2210633).